A 566-amino-acid polypeptide reads, in one-letter code: NAD-dependent malic enzyme (566 aa).

The active-site Proton donor is Y105. R158 contributes to the NAD(+) binding site. The active-site Proton acceptor is K176. Residues E247, D248, and D271 each coordinate a divalent metal cation. NAD(+) is bound by residues D271 and N419.

This sequence belongs to the malic enzymes family. Homotetramer. Mg(2+) serves as cofactor. The cofactor is Mn(2+).

The enzyme catalyses (S)-malate + NAD(+) = pyruvate + CO2 + NADH. It catalyses the reaction oxaloacetate + H(+) = pyruvate + CO2. In Acinetobacter baylyi (strain ATCC 33305 / BD413 / ADP1), this protein is NAD-dependent malic enzyme.